A 529-amino-acid chain; its full sequence is MFNINHQLELSKRRTFAIISHPDAGKTTVTEKMLLLGKVIRTSGTIKARGNGKYAKSDWMNIEKKRGISITTSVMQFTYKNTLMNLLDTPGHEDFSEDTYRILTAVDCCLLIIDAAKGIEDRTKKLINVSRLHNTPVITFINKLDRDSREAIEILDEIEKELSLDCIPITWPISCGKNFKGICHIHDKIVNLYQKNIVKKINFNSFSSFLNEHSLKEYLGADLYTQLHEELKLAAYVYPKFSKKKFLKGDITPVLFGSALNNFGIDHILESLIKWAPSPIYRVTKTRKVEPEEKKFTGFVFKIQANMDLKHRDRIAFMRIVSGKYKKGIKLRHVRMKKDIIVSDAFSFLAGDRFSIEHAYPGDVIGIHNHGTIKIGDTFTEGEEIKFVGIPSFAPEVFRRIFLKNPLQQKKLKKGLSQLSEEGAIQVFRPMINNSLILGAIGILQFDVVIERLKIEYKIDAIYERVNISLARWIRSKNKKIISDFINKNKSYLALDISNQLIYLAPNKANLAVIKNIYNNIFFEKTREQ.

Residues Ser-11–Ile-280 form the tr-type G domain. GTP contacts are provided by residues Ser-20–Thr-27, Asp-88–His-92, and Asn-142–Asp-145.

It belongs to the TRAFAC class translation factor GTPase superfamily. Classic translation factor GTPase family. PrfC subfamily.

Its subcellular location is the cytoplasm. In terms of biological role, increases the formation of ribosomal termination complexes and stimulates activities of RF-1 and RF-2. It binds guanine nucleotides and has strong preference for UGA stop codons. It may interact directly with the ribosome. The stimulation of RF-1 and RF-2 is significantly reduced by GTP and GDP, but not by GMP. In Buchnera aphidicola subsp. Schizaphis graminum (strain Sg), this protein is Peptide chain release factor 3.